Here is a 354-residue protein sequence, read N- to C-terminus: UPF0283 membrane protein plu2581 (354 aa).

3 consecutive transmembrane segments (helical) span residues 71–91 (MVYG…VQWI), 101–121 (SALG…GSLV), and 214–234 (ESAL…FIAW).

Belongs to the UPF0283 family.

It localises to the cell inner membrane. The chain is UPF0283 membrane protein plu2581 from Photorhabdus laumondii subsp. laumondii (strain DSM 15139 / CIP 105565 / TT01) (Photorhabdus luminescens subsp. laumondii).